We begin with the raw amino-acid sequence, 853 residues long: DNA mismatch repair protein MutS (853 aa).

Residue 614-621 (GPNMGGKS) participates in ATP binding.

This sequence belongs to the DNA mismatch repair MutS family.

Its function is as follows. This protein is involved in the repair of mismatches in DNA. It is possible that it carries out the mismatch recognition step. This protein has a weak ATPase activity. The chain is DNA mismatch repair protein MutS from Cronobacter sakazakii (strain ATCC BAA-894) (Enterobacter sakazakii).